The chain runs to 298 residues: NAD-dependent L-serine dehydrogenase (298 aa).

Residues 2 to 31, 65 to 66, Pro-66, and Thr-96 contribute to the NAD(+) site; these read KQIA…NVFD and LP. Lys-171 is an active-site residue. Lys-246 lines the NAD(+) pocket.

The protein belongs to the HIBADH-related family. In terms of assembly, homotetramer, dimer of dimers.

The catalysed reaction is L-serine + NAD(+) = aminoacetaldehyde + CO2 + NADH. It functions in the pathway amino-acid degradation. Its function is as follows. NAD-dependent L-serine dehydrogenase that catalyzes the oxidation of L-serine and methyl-L-serine and is possibly involved in serine catabolism. Has low activity toward beta-hydroxyisobutyrate. The protein is NAD-dependent L-serine dehydrogenase of Pseudomonas aeruginosa (strain ATCC 15692 / DSM 22644 / CIP 104116 / JCM 14847 / LMG 12228 / 1C / PRS 101 / PAO1).